A 157-amino-acid chain; its full sequence is MAEQASEQQNITEKEKEQLPLTIKGLSESLGIPFVDCLIPCNFCGKFLDYLEACEFEVKKLSLIWKDYCVFACCRVCCGATATYEFNQFYQQTVLGRDIELAAGRSIFEIDIRCQTCLAFLDIIEKLDCCGRGLPFHRVRNAWKGICRQCKHFYNDW.

Zinc fingers lie at residues 41 to 77 (CNFCGKFLDYLEACEFEVKKLSLIWKDYCVFACCRVC) and 114 to 150 (CQTCLAFLDIIEKLDCCGRGLPFHRVRNAWKGICRQC).

Belongs to the papillomaviridae E6 protein family. Forms homodimers. Interacts with ubiquitin-protein ligase UBE3A/E6-AP; this interaction stimulates UBE3A ubiquitin activity. Interacts with host BAK1.

Its subcellular location is the host cytoplasm. It localises to the host nucleus. Its function is as follows. Plays a major role in the induction and maintenance of cellular transformation. E6 associates with host UBE3A/E6-AP ubiquitin-protein ligase and modulates its activity. Protects host keratinocytes from apoptosis by mediating the degradation of host BAK1. May also inhibit host immune response. In Human papillomavirus 36, this protein is Protein E6.